The sequence spans 338 residues: MDLFSHLNWYSGDFMNEDGEPIKSIPSGKLILVSDTLESEGSFLIHYFLQSIFKATTSTNSSTNNNNSNNSGGVGGGACLLGLNQSLYNYFNVGRKLGYNLTTEYNKGNFTFINGLSTPYKWIIEQRLQQLEDQGIDEEPQLDSISQGFNPFPTIHLIDNKNITSSSSSSSYSNSNNKNKNNNELKDILYKIYNEFINDHKKRVMNNNNNSKTLFIIDGLNLLESHYSTNPSGSNMDILNFLQYCHNYIKENSTTCSMIILYHSDCDEDSKFFNLLQYESDLTINITGLKSGYSKDIDGQLNFIQKDEKNNTFTRVNPIHYQALDNSIRFFSMGSRIQ.

This sequence belongs to the ELP6 family. As to quaternary structure, component of the elongator complex.

It functions in the pathway tRNA modification; 5-methoxycarbonylmethyl-2-thiouridine-tRNA biosynthesis. In terms of biological role, component of the elongator complex which is required for multiple tRNA modifications, including mcm5U (5-methoxycarbonylmethyl uridine), mcm5s2U (5-methoxycarbonylmethyl-2-thiouridine), and ncm5U (5-carbamoylmethyl uridine). The elongator complex catalyzes formation of carboxymethyluridine in the wobble base at position 34 in tRNAs. The sequence is that of Elongator complex protein 6 (elp6) from Dictyostelium discoideum (Social amoeba).